Here is a 502-residue protein sequence, read N- to C-terminus: Cytochrome P450 71B16 (502 aa).

A helical transmembrane segment spans residues Met1 to Lys21. Cys444 serves as a coordination point for heme.

The protein belongs to the cytochrome P450 family. Heme serves as cofactor.

The protein localises to the membrane. The sequence is that of Cytochrome P450 71B16 (CYP71B16) from Arabidopsis thaliana (Mouse-ear cress).